Here is a 353-residue protein sequence, read N- to C-terminus: Photosystem II protein D1 (353 aa).

Position 2 is an N-acetylthreonine (Thr-2). At Thr-2 the chain carries Phosphothreonine. 3 helical membrane passes run 29 to 46 (YIGW…TATS), 118 to 133 (HFLL…EWEL), and 142 to 156 (WIAV…AATA). His-118 lines the chlorophyll a pocket. Tyr-126 provides a ligand contact to pheophytin a. 2 residues coordinate [CaMn4O5] cluster: Asp-170 and Glu-189. Residues 197–218 (FHMLGVAGVFGGSLFSAMHGSL) form a helical membrane-spanning segment. His-198 serves as a coordination point for chlorophyll a. A quinone-binding positions include His-215 and 264–265 (SF). His-215 lines the Fe cation pocket. His-272 provides a ligand contact to Fe cation. The chain crosses the membrane as a helical span at residues 274–288 (FLAAWPVVGIWFTAL). [CaMn4O5] cluster contacts are provided by His-332, Glu-333, Asp-342, and Ala-344. Positions 345–353 (AVEAPSTNG) are excised as a propeptide.

Belongs to the reaction center PufL/M/PsbA/D family. PSII is composed of 1 copy each of membrane proteins PsbA, PsbB, PsbC, PsbD, PsbE, PsbF, PsbH, PsbI, PsbJ, PsbK, PsbL, PsbM, PsbT, PsbX, PsbY, PsbZ, Psb30/Ycf12, at least 3 peripheral proteins of the oxygen-evolving complex and a large number of cofactors. It forms dimeric complexes. The D1/D2 heterodimer binds P680, chlorophylls that are the primary electron donor of PSII, and subsequent electron acceptors. It shares a non-heme iron and each subunit binds pheophytin, quinone, additional chlorophylls, carotenoids and lipids. D1 provides most of the ligands for the Mn4-Ca-O5 cluster of the oxygen-evolving complex (OEC). There is also a Cl(-1) ion associated with D1 and D2, which is required for oxygen evolution. The PSII complex binds additional chlorophylls, carotenoids and specific lipids. serves as cofactor. Post-translationally, tyr-161 forms a radical intermediate that is referred to as redox-active TyrZ, YZ or Y-Z. In terms of processing, C-terminally processed by CTPA; processing is essential to allow assembly of the oxygen-evolving complex and thus photosynthetic growth.

The protein resides in the plastid. It is found in the chloroplast thylakoid membrane. It carries out the reaction 2 a plastoquinone + 4 hnu + 2 H2O = 2 a plastoquinol + O2. Its function is as follows. Photosystem II (PSII) is a light-driven water:plastoquinone oxidoreductase that uses light energy to abstract electrons from H(2)O, generating O(2) and a proton gradient subsequently used for ATP formation. It consists of a core antenna complex that captures photons, and an electron transfer chain that converts photonic excitation into a charge separation. The D1/D2 (PsbA/PsbD) reaction center heterodimer binds P680, the primary electron donor of PSII as well as several subsequent electron acceptors. The sequence is that of Photosystem II protein D1 from Lepidium virginicum (Virginia pepperweed).